The chain runs to 697 residues: Lebercilin (697 aa).

Residues 1 to 90 are disordered; the sequence is MGERAGSPGT…VGFRSQSLNR (90 aa). Phosphoserine occurs at positions 7 and 45. Over residues 32–45 the composition is skewed to low complexity; that stretch reads SSGRSSLVSSSPAS. 2 coiled-coil regions span residues 103-297 and 389-485; these read RILS…IKNI and EEKF…RNLK. 3 disordered regions span residues 412–432, 522–548, and 606–697; these read WERE…EREE, HHLQ…PASP, and EQLF…VALR. Basic and acidic residues predominate over residues 416 to 432; sequence ELDKKQKEKASLLEREE. Residues 527-547 show a composition bias toward polar residues; that stretch reads ISFSTPKGEGQNSGNVRSPAS. A compositionally biased stretch (low complexity) spans 612–626; the sequence is SGSSTISSKSSDPNS. Residues 686–697 show a composition bias toward acidic residues; that stretch reads SVEDEIEEVALR.

This sequence belongs to the LCA5 family. In terms of assembly, interacts with NINL. Interacts with OFD1. Interacts with FAM161A. Interacts with components of the IFT complex B. In terms of tissue distribution, widely expressed.

Its subcellular location is the cytoplasm. It localises to the cytoskeleton. The protein resides in the cilium axoneme. It is found in the cilium basal body. The protein localises to the microtubule organizing center. Its subcellular location is the centrosome. It localises to the cell projection. The protein resides in the cilium. Its function is as follows. Involved in intraflagellar protein (IFT) transport in photoreceptor cilia. The sequence is that of Lebercilin (LCA5) from Homo sapiens (Human).